The sequence spans 465 residues: Dihydrolipoyl dehydrogenase (465 aa).

Residues Glu34–Cys42, Lys51, and Gly114 each bind FAD. A disulfide bond links Cys42 and Cys47. Residues Gly180–Ile184, Glu203, Val237, and Ser264–Arg267 contribute to the NAD(+) site. 2 residues coordinate FAD: Asp307 and Ala315. His439 serves as the catalytic Proton acceptor.

It belongs to the class-I pyridine nucleotide-disulfide oxidoreductase family. Requires FAD as cofactor.

It localises to the cytoplasm. The catalysed reaction is N(6)-[(R)-dihydrolipoyl]-L-lysyl-[protein] + NAD(+) = N(6)-[(R)-lipoyl]-L-lysyl-[protein] + NADH + H(+). In terms of biological role, the branched-chain alpha-keto dehydrogenase complex catalyzes the overall conversion of alpha-keto acids to acyl-CoA and CO(2). It contains multiple copies of 3 enzymatic components: branched-chain alpha-keto acid decarboxylase (E1), lipoamide acyltransferase (E2) and lipoamide dehydrogenase (E3). The polypeptide is Dihydrolipoyl dehydrogenase (lpdA) (Chlamydia trachomatis serovar D (strain ATCC VR-885 / DSM 19411 / UW-3/Cx)).